Reading from the N-terminus, the 154-residue chain is Large ribosomal subunit protein uL13 (154 aa).

The protein belongs to the universal ribosomal protein uL13 family. As to quaternary structure, part of the 50S ribosomal subunit.

Functionally, this protein is one of the early assembly proteins of the 50S ribosomal subunit, although it is not seen to bind rRNA by itself. It is important during the early stages of 50S assembly. The sequence is that of Large ribosomal subunit protein uL13 from Brucella anthropi (strain ATCC 49188 / DSM 6882 / CCUG 24695 / JCM 21032 / LMG 3331 / NBRC 15819 / NCTC 12168 / Alc 37) (Ochrobactrum anthropi).